We begin with the raw amino-acid sequence, 72 residues long: Large ribosomal subunit protein bL31 (72 aa).

Residues Cys-16, Cys-18, Cys-38, and Cys-41 each contribute to the Zn(2+) site.

It belongs to the bacterial ribosomal protein bL31 family. Type A subfamily. As to quaternary structure, part of the 50S ribosomal subunit. Zn(2+) is required as a cofactor.

Its function is as follows. Binds the 23S rRNA. This is Large ribosomal subunit protein bL31 from Vibrio cholerae serotype O1 (strain ATCC 39541 / Classical Ogawa 395 / O395).